We begin with the raw amino-acid sequence, 222 residues long: Probable GTP-binding protein EngB (222 aa).

Residues 22–197 (TSAEIAFVGR…ETVVAGWFAG (176 aa)) enclose the EngB-type G domain. Residues S37 and T59 each coordinate Mg(2+). The disordered stretch occupies residues 201–222 (RQADELTDGEPDDRTPDPDSAS). Over residues 212 to 222 (DDRTPDPDSAS) the composition is skewed to basic and acidic residues.

The protein belongs to the TRAFAC class TrmE-Era-EngA-EngB-Septin-like GTPase superfamily. EngB GTPase family. Mg(2+) is required as a cofactor.

Functionally, necessary for normal cell division and for the maintenance of normal septation. In Laribacter hongkongensis (strain HLHK9), this protein is Probable GTP-binding protein EngB.